The following is a 281-amino-acid chain: Phosphatidylglycerol--prolipoprotein diacylglyceryl transferase (281 aa).

The next 7 membrane-spanning stretches (helical) occupy residues I11 to F31, L57 to Y77, V89 to V109, I121 to I141, P194 to F214, G222 to F242, and I255 to Y275. Residue R140 coordinates a 1,2-diacyl-sn-glycero-3-phospho-(1'-sn-glycerol).

It belongs to the Lgt family.

It localises to the cell inner membrane. The catalysed reaction is L-cysteinyl-[prolipoprotein] + a 1,2-diacyl-sn-glycero-3-phospho-(1'-sn-glycerol) = an S-1,2-diacyl-sn-glyceryl-L-cysteinyl-[prolipoprotein] + sn-glycerol 1-phosphate + H(+). It participates in protein modification; lipoprotein biosynthesis (diacylglyceryl transfer). Its function is as follows. Catalyzes the transfer of the diacylglyceryl group from phosphatidylglycerol to the sulfhydryl group of the N-terminal cysteine of a prolipoprotein, the first step in the formation of mature lipoproteins. The polypeptide is Phosphatidylglycerol--prolipoprotein diacylglyceryl transferase (Buchnera aphidicola subsp. Acyrthosiphon pisum (strain Tuc7)).